A 59-amino-acid polypeptide reads, in one-letter code: Large ribosomal subunit protein bL32 (59 aa).

The span at 1–15 (MAVPKKKTSKSKRDM) shows a compositional bias: basic residues. The segment at 1–26 (MAVPKKKTSKSKRDMRRATWNRKAAA) is disordered.

It belongs to the bacterial ribosomal protein bL32 family.

The chain is Large ribosomal subunit protein bL32 from Cyanothece sp. (strain PCC 7425 / ATCC 29141).